Consider the following 598-residue polypeptide: Elongation factor 4 (598 aa).

Positions S5–I187 constitute a tr-type G domain. GTP is bound by residues D17–T22 and N134–D137.

It belongs to the TRAFAC class translation factor GTPase superfamily. Classic translation factor GTPase family. LepA subfamily.

Its subcellular location is the cell inner membrane. The catalysed reaction is GTP + H2O = GDP + phosphate + H(+). Functionally, required for accurate and efficient protein synthesis under certain stress conditions. May act as a fidelity factor of the translation reaction, by catalyzing a one-codon backward translocation of tRNAs on improperly translocated ribosomes. Back-translocation proceeds from a post-translocation (POST) complex to a pre-translocation (PRE) complex, thus giving elongation factor G a second chance to translocate the tRNAs correctly. Binds to ribosomes in a GTP-dependent manner. This Pseudomonas fluorescens (strain Pf0-1) protein is Elongation factor 4.